Reading from the N-terminus, the 202-residue chain is Solute carrier family 66 member 3 (202 aa).

The N-terminal stretch at 1–19 is a signal peptide; sequence MEAALLGLCNWSTLGVCAA. A run of 4 helical transmembrane segments spans residues 33 to 53, 64 to 84, 97 to 117, and 171 to 191; these read SARGLSLPSLLLELAGFLVFL, LTYLEYPILIAQDVILLLCIF, IAVLVSSWFILALQKWIIDLA, and FTILLRFVIMLALNIWVTVTV.

The protein resides in the membrane. The chain is Solute carrier family 66 member 3 from Homo sapiens (Human).